Here is a 100-residue protein sequence, read N- to C-terminus: UPF0125 protein CV_3462 (100 aa).

Belongs to the UPF0125 (RnfH) family.

The protein is UPF0125 protein CV_3462 of Chromobacterium violaceum (strain ATCC 12472 / DSM 30191 / JCM 1249 / CCUG 213 / NBRC 12614 / NCIMB 9131 / NCTC 9757 / MK).